A 146-amino-acid polypeptide reads, in one-letter code: Large ribosomal subunit protein uL15 (146 aa).

Over residues 1-18 (MKLHELKPSEGSRKERNR) the composition is skewed to basic and acidic residues. The disordered stretch occupies residues 1 to 50 (MKLHELKPSEGSRKERNRVGRGTGSGNGKTSGRGHKGQKARSGGGVRLGF). Residues 21–31 (RGTGSGNGKTS) show a composition bias toward gly residues.

It belongs to the universal ribosomal protein uL15 family. As to quaternary structure, part of the 50S ribosomal subunit.

In terms of biological role, binds to the 23S rRNA. The polypeptide is Large ribosomal subunit protein uL15 (Listeria monocytogenes serotype 4b (strain CLIP80459)).